The following is a 236-amino-acid chain: Phosphatidylserine decarboxylase proenzyme (236 aa).

The active-site Schiff-base intermediate with substrate; via pyruvic acid is the serine 203. Residue serine 203 is modified to Pyruvic acid (Ser); by autocatalysis.

The protein belongs to the phosphatidylserine decarboxylase family. PSD-A subfamily. In terms of assembly, heterodimer of a large membrane-associated beta subunit and a small pyruvoyl-containing alpha subunit. Requires pyruvate as cofactor. In terms of processing, is synthesized initially as an inactive proenzyme. Formation of the active enzyme involves a self-maturation process in which the active site pyruvoyl group is generated from an internal serine residue via an autocatalytic post-translational modification. Two non-identical subunits are generated from the proenzyme in this reaction, and the pyruvate is formed at the N-terminus of the alpha chain, which is derived from the carboxyl end of the proenzyme. The post-translation cleavage follows an unusual pathway, termed non-hydrolytic serinolysis, in which the side chain hydroxyl group of the serine supplies its oxygen atom to form the C-terminus of the beta chain, while the remainder of the serine residue undergoes an oxidative deamination to produce ammonia and the pyruvoyl prosthetic group on the alpha chain.

It localises to the cell membrane. It catalyses the reaction a 1,2-diacyl-sn-glycero-3-phospho-L-serine + H(+) = a 1,2-diacyl-sn-glycero-3-phosphoethanolamine + CO2. It participates in phospholipid metabolism; phosphatidylethanolamine biosynthesis; phosphatidylethanolamine from CDP-diacylglycerol: step 2/2. Its function is as follows. Catalyzes the formation of phosphatidylethanolamine (PtdEtn) from phosphatidylserine (PtdSer). In Saccharopolyspora erythraea (strain ATCC 11635 / DSM 40517 / JCM 4748 / NBRC 13426 / NCIMB 8594 / NRRL 2338), this protein is Phosphatidylserine decarboxylase proenzyme.